Here is a 660-residue protein sequence, read N- to C-terminus: Bifunctional polymyxin resistance protein ArnA (660 aa).

A formyltransferase ArnAFT region spans residues 1–304; sequence MKTVVFAYHD…TLGLVQGSRL (304 aa). 86 to 88 serves as a coordination point for (6R)-10-formyltetrahydrofolate; the sequence is HLI. His104 acts as the Proton donor; for formyltransferase activity in catalysis. (6R)-10-formyltetrahydrofolate-binding positions include Arg114 and 136 to 140; that span reads VKRAD. The interval 314–660 is dehydrogenase ArnADH; sequence RRTRVLILGV…RTVDLTDKPS (347 aa). NAD(+) is bound by residues Asp347 and 368–369; that span reads DI. UDP-alpha-D-glucuronate is bound by residues Ala393, Tyr398, and 432-433; that span reads TS. Glu434 acts as the Proton acceptor; for decarboxylase activity in catalysis. UDP-alpha-D-glucuronate-binding positions include Arg460, Asn492, 526–535, and Tyr613; that span reads KLIDGGKQKR. Residue Arg619 is the Proton donor; for decarboxylase activity of the active site.

In the N-terminal section; belongs to the Fmt family. UDP-L-Ara4N formyltransferase subfamily. The protein in the C-terminal section; belongs to the NAD(P)-dependent epimerase/dehydratase family. UDP-glucuronic acid decarboxylase subfamily. Homohexamer, formed by a dimer of trimers.

It carries out the reaction UDP-alpha-D-glucuronate + NAD(+) = UDP-beta-L-threo-pentopyranos-4-ulose + CO2 + NADH. The enzyme catalyses UDP-4-amino-4-deoxy-beta-L-arabinose + (6R)-10-formyltetrahydrofolate = UDP-4-deoxy-4-formamido-beta-L-arabinose + (6S)-5,6,7,8-tetrahydrofolate + H(+). The protein operates within nucleotide-sugar biosynthesis; UDP-4-deoxy-4-formamido-beta-L-arabinose biosynthesis; UDP-4-deoxy-4-formamido-beta-L-arabinose from UDP-alpha-D-glucuronate: step 1/3. It participates in nucleotide-sugar biosynthesis; UDP-4-deoxy-4-formamido-beta-L-arabinose biosynthesis; UDP-4-deoxy-4-formamido-beta-L-arabinose from UDP-alpha-D-glucuronate: step 3/3. Its pathway is bacterial outer membrane biogenesis; lipopolysaccharide biosynthesis. Functionally, bifunctional enzyme that catalyzes the oxidative decarboxylation of UDP-glucuronic acid (UDP-GlcUA) to UDP-4-keto-arabinose (UDP-Ara4O) and the addition of a formyl group to UDP-4-amino-4-deoxy-L-arabinose (UDP-L-Ara4N) to form UDP-L-4-formamido-arabinose (UDP-L-Ara4FN). The modified arabinose is attached to lipid A and is required for resistance to polymyxin and cationic antimicrobial peptides. The sequence is that of Bifunctional polymyxin resistance protein ArnA from Escherichia coli O17:K52:H18 (strain UMN026 / ExPEC).